Reading from the N-terminus, the 430-residue chain is Histidine--tRNA ligase (430 aa).

It belongs to the class-II aminoacyl-tRNA synthetase family. Homodimer.

It is found in the cytoplasm. It carries out the reaction tRNA(His) + L-histidine + ATP = L-histidyl-tRNA(His) + AMP + diphosphate + H(+). This chain is Histidine--tRNA ligase, found in Chlorobaculum parvum (strain DSM 263 / NCIMB 8327) (Chlorobium vibrioforme subsp. thiosulfatophilum).